Reading from the N-terminus, the 307-residue chain is Elongation factor Ts (307 aa).

Positions 82–85 (TDFV) are involved in Mg(2+) ion dislocation from EF-Tu.

Belongs to the EF-Ts family.

The protein localises to the cytoplasm. Functionally, associates with the EF-Tu.GDP complex and induces the exchange of GDP to GTP. It remains bound to the aminoacyl-tRNA.EF-Tu.GTP complex up to the GTP hydrolysis stage on the ribosome. The chain is Elongation factor Ts from Nautilia profundicola (strain ATCC BAA-1463 / DSM 18972 / AmH).